A 310-amino-acid chain; its full sequence is HMG box-containing protein C28F2.11 (310 aa).

A compositionally biased stretch (low complexity) spans 69 to 95; the sequence is ESPSKKATSPKKATPAAVAPVEATSAV. Residues 69–310 form a disordered region; sequence ESPSKKATSP…TTPPTAKVAN (242 aa). A Phosphoserine modification is found at Ser-70. Thr-105 is modified (phosphothreonine). The segment at residues 117-187 is a DNA-binding region (HMG box); sequence PKRPPSAYNL…AYEEEMAAYN (71 aa). Basic and acidic residues-rich tracts occupy residues 131 to 178 and 200 to 226; these read QRSE…LREA and VTAE…DFSE. Phosphoserine occurs at positions 161, 214, and 215. Thr-217 and Thr-237 each carry phosphothreonine. Polar residues predominate over residues 255-268; sequence STVPTSNVEPVSQP. A phosphoserine mark is found at Ser-271, Ser-278, Ser-294, Ser-295, and Ser-297. Phosphothreonine is present on residues Thr-302 and Thr-305.

The protein localises to the cytoplasm. This chain is HMG box-containing protein C28F2.11, found in Schizosaccharomyces pombe (strain 972 / ATCC 24843) (Fission yeast).